The chain runs to 46 residues: Protein PsbN (46 aa).

A helical transmembrane segment spans residues 10 to 30; it reads VAIAVLAALLGLTGFGVYTAF.

Belongs to the PsbN family.

Its subcellular location is the cellular thylakoid membrane. May play a role in photosystem I and II biogenesis. The protein is Protein PsbN of Synechococcus sp. (strain CC9311).